We begin with the raw amino-acid sequence, 339 residues long: HTH-type transcriptional regulator PtxS (339 aa).

One can recognise an HTH lacI-type domain in the interval 12 to 67; it reads VTISEVARVAGVSKATVSRYIGGDRQLLAEATAKRLEEVIERLGYRPNQMARGLKR. The segment at residues 14–33 is a DNA-binding region (H-T-H motif); it reads ISEVARVAGVSKATVSRYIG.

As to quaternary structure, homodimer in solution.

2-ketogluconate acts as a molecular effector and causes dissociation of PtxS from its target promoter. In terms of biological role, negatively regulates glucose metabolism by binding directly to the promoter region of the kgu and gad operons. It also negatively regulates its own synthesis. The protein is HTH-type transcriptional regulator PtxS of Pseudomonas putida (strain ATCC 47054 / DSM 6125 / CFBP 8728 / NCIMB 11950 / KT2440).